Here is a 223-residue protein sequence, read N- to C-terminus: Endonuclease NucS (223 aa).

The protein belongs to the NucS endonuclease family.

It localises to the cytoplasm. Its function is as follows. Cleaves both 3' and 5' ssDNA extremities of branched DNA structures. The protein is Endonuclease NucS of Streptomyces avermitilis (strain ATCC 31267 / DSM 46492 / JCM 5070 / NBRC 14893 / NCIMB 12804 / NRRL 8165 / MA-4680).